We begin with the raw amino-acid sequence, 349 residues long: UDP-N-acetylenolpyruvoylglucosamine reductase (349 aa).

An FAD-binding PCMH-type domain is found at 24-197; the sequence is FGIDATARFA…VAVTFRLPKR (174 aa). The active site involves Arg173. Ser249 serves as the catalytic Proton donor. Glu345 is a catalytic residue.

The protein belongs to the MurB family. The cofactor is FAD.

Its subcellular location is the cytoplasm. The catalysed reaction is UDP-N-acetyl-alpha-D-muramate + NADP(+) = UDP-N-acetyl-3-O-(1-carboxyvinyl)-alpha-D-glucosamine + NADPH + H(+). It participates in cell wall biogenesis; peptidoglycan biosynthesis. Functionally, cell wall formation. The polypeptide is UDP-N-acetylenolpyruvoylglucosamine reductase (Burkholderia ambifaria (strain MC40-6)).